A 189-amino-acid polypeptide reads, in one-letter code: Chitin synthase 1 (189 aa).

The protein belongs to the chitin synthase family. Class I subfamily.

It is found in the cell membrane. The enzyme catalyses [(1-&gt;4)-N-acetyl-beta-D-glucosaminyl](n) + UDP-N-acetyl-alpha-D-glucosamine = [(1-&gt;4)-N-acetyl-beta-D-glucosaminyl](n+1) + UDP + H(+). In terms of biological role, polymerizes chitin, a structural polymer of the cell wall and septum, by transferring the sugar moiety of UDP-GlcNAc to the non-reducing end of the growing chitin polymer. The sequence is that of Chitin synthase 1 (CHS1) from Ajellomyces capsulatus (Darling's disease fungus).